Consider the following 144-residue polypeptide: Na(+)/H(+) antiporter subunit B (144 aa).

4 helical membrane-spanning segments follow: residues 9–31, 41–58, 75–97, and 117–139; these read VLLH…YLFF, FIGG…YLGF, IAFG…DPYL, and ALPF…ILTI.

This sequence belongs to the CPA3 antiporters (TC 2.A.63) subunit B family. Forms a heterooligomeric complex that consists of seven subunits: MrpA, MrpB, MrpC, MrpD, MrpE, MrpF and MrpG.

The protein localises to the cell membrane. Its function is as follows. Mnh complex is a Na(+)Li(+)/H(+) antiporter involved in Na(+) and/or Li(+) excretion and Na(+) resistance. Na(+)/H(+) antiport consumes a transmembrane electrical potential, and is thus inferred to be electrogenic. Does not transport K(+), Ca(2+) or Mg(2+). The protein is Na(+)/H(+) antiporter subunit B (mrpB) of Alkalihalophilus pseudofirmus (strain ATCC BAA-2126 / JCM 17055 / OF4) (Bacillus pseudofirmus).